The chain runs to 246 residues: Ribonuclease PH (246 aa).

Residues Arg91 and 129-131 (GTR) contribute to the phosphate site.

Belongs to the RNase PH family. In terms of assembly, homohexameric ring arranged as a trimer of dimers.

The catalysed reaction is tRNA(n+1) + phosphate = tRNA(n) + a ribonucleoside 5'-diphosphate. In terms of biological role, phosphorolytic 3'-5' exoribonuclease that plays an important role in tRNA 3'-end maturation. Removes nucleotide residues following the 3'-CCA terminus of tRNAs; can also add nucleotides to the ends of RNA molecules by using nucleoside diphosphates as substrates, but this may not be physiologically important. Probably plays a role in initiation of 16S rRNA degradation (leading to ribosome degradation) during starvation. The polypeptide is Ribonuclease PH (Burkholderia orbicola (strain MC0-3)).